A 301-amino-acid chain; its full sequence is Small ribosomal subunit protein uS2 (301 aa).

Positions 237-301 (PTESWNDTVV…QDWSNSTSQW (65 aa)) are disordered. The segment covering 264–278 (PQYAPAPQAAAAPVA) has biased composition (low complexity).

This sequence belongs to the universal ribosomal protein uS2 family. Component of the small ribosomal subunit. Mature ribosomes consist of a small (40S) and a large (60S) subunit. The 40S subunit contains about 33 different proteins and 1 molecule of RNA (18S). The 60S subunit contains about 49 different proteins and 3 molecules of RNA (28S, 5.8S and 5S). Interacts with ribosomal protein S21.

Its subcellular location is the cytoplasm. Required for the assembly and/or stability of the 40S ribosomal subunit. Required for the processing of the 20S rRNA-precursor to mature 18S rRNA in a late step of the maturation of 40S ribosomal subunits. The sequence is that of Small ribosomal subunit protein uS2 from Diaphorina citri (Asian citrus psyllid).